The primary structure comprises 75 residues: uncharacterized protein (75 aa).

Transmembrane regions (helical) follow at residues 7–26 and 36–58; these read LINAVFRIACGLTIMSAASA and MHLFYIFMGAMKAGSGILRFCPV.

The protein resides in the cell membrane. This is an uncharacterized protein from Bacillus subtilis (strain 168).